A 134-amino-acid chain; its full sequence is Loki profilin-1 (134 aa).

The segment at Leu55–Ile62 is loki loop.

It belongs to the Asgard profilin family.

The protein resides in the cytoplasm. Its subcellular location is the cytoskeleton. With respect to regulation, inhibition of rabbit actin polymerization is reduced by phosphatidylinositol-(4,5)-P2(1,2-dipalmitoyl), a soluble form of the phospholipid phosphatidylinositol, suggesting an unknown lipid might regulate actin-profilin interaction in vivo. Binds to actin and affects the structure of the cytoskeleton. At high concentrations inhibits spontaneous rabbit actin nucleation. This strongly suggests this archaea has a profilin-regulated actin system, and actin-type genes can be identified in this organism. The sequence is that of Loki profilin-1 from Lokiarchaeum sp. (strain GC14_75).